The sequence spans 481 residues: Tripartite motif-containing protein 10 (481 aa).

Residues 16–61 (CPICQGTLREPVTIDCGHNFCRACLTRYCEIPGPDLEESPTCPLCK) form an RING-type zinc finger. The B box-type zinc finger occupies 94 to 135 (GEEDVCQEHGEKIYFFCEDDEMQLCVVCREAGEHATHTMRFL). Cys99, His102, Cys121, and His127 together coordinate Zn(2+). Residues 142-177 (YREQIHKCLKRLRKEREETQEIQSRENKRMQVLLTQ) adopt a coiled-coil conformation. Positions 292–481 (REMKMFLEKL…GRGSSFFLSS (190 aa)) constitute a B30.2/SPRY domain.

This sequence belongs to the TRIM/RBCC family. In terms of assembly, interacts with IFNAR1; this interaction prevents association of IFNAR1 with TYK2.

The protein localises to the cytoplasm. E3 ligase that plays an essential role in the differentiation and survival of terminal erythroid cells. May directly bind to PTEN and promote its ubiquitination, resulting in its proteasomal degradation and activation of hypertrophic signaling. In addition, plays a role in immune response regulation by repressing the phosphorylation of STAT1 and STAT2 in the interferon/JAK/STAT signaling pathway independent of its E3 ligase activity. Mechanistically, interacts with the intracellular domain of IFNAR1 and thereby inhibits the association of TYK2 and IFNAR1. This is Tripartite motif-containing protein 10 (TRIM10) from Pan troglodytes (Chimpanzee).